Consider the following 262-residue polypeptide: Tryptophan synthase alpha chain (262 aa).

Residues Glu48 and Asp59 each act as proton acceptor in the active site.

This sequence belongs to the TrpA family. In terms of assembly, tetramer of two alpha and two beta chains.

The catalysed reaction is (1S,2R)-1-C-(indol-3-yl)glycerol 3-phosphate + L-serine = D-glyceraldehyde 3-phosphate + L-tryptophan + H2O. It functions in the pathway amino-acid biosynthesis; L-tryptophan biosynthesis; L-tryptophan from chorismate: step 5/5. The alpha subunit is responsible for the aldol cleavage of indoleglycerol phosphate to indole and glyceraldehyde 3-phosphate. The polypeptide is Tryptophan synthase alpha chain (Helicobacter pylori (strain G27)).